Reading from the N-terminus, the 75-residue chain is Metallothionein-like protein 1B (75 aa).

It belongs to the metallothionein superfamily. Type 15 family.

Functionally, metallothioneins have a high content of cysteine residues that bind various heavy metals. The chain is Metallothionein-like protein 1B (MT1B) from Vicia faba (Broad bean).